The primary structure comprises 171 residues: ATP synthase subunit b (171 aa).

A helical membrane pass occupies residues 26–46; it reads INLVLVIALLVYFLKGFLGGI.

This sequence belongs to the ATPase B chain family. F-type ATPases have 2 components, F(1) - the catalytic core - and F(0) - the membrane proton channel. F(1) has five subunits: alpha(3), beta(3), gamma(1), delta(1), epsilon(1). F(0) has four main subunits: a(1), b(1), b'(1) and c(10-14). The alpha and beta chains form an alternating ring which encloses part of the gamma chain. F(1) is attached to F(0) by a central stalk formed by the gamma and epsilon chains, while a peripheral stalk is formed by the delta, b and b' chains.

The protein localises to the cellular thylakoid membrane. Its function is as follows. F(1)F(0) ATP synthase produces ATP from ADP in the presence of a proton or sodium gradient. F-type ATPases consist of two structural domains, F(1) containing the extramembraneous catalytic core and F(0) containing the membrane proton channel, linked together by a central stalk and a peripheral stalk. During catalysis, ATP synthesis in the catalytic domain of F(1) is coupled via a rotary mechanism of the central stalk subunits to proton translocation. Component of the F(0) channel, it forms part of the peripheral stalk, linking F(1) to F(0). The sequence is that of ATP synthase subunit b from Synechococcus sp. (strain RCC307).